The chain runs to 431 residues: IMP-specific 5'-nucleotidase 1 (431 aa).

Position 117 (Lys117) interacts with ATP. Residue Asp157 is the Nucleophile of the active site. IMP is bound by residues Asp157, Asp159, Asp165, Thr193, Asp349, and Lys357. Mg(2+)-binding residues include Asp157 and Asp159. Catalysis depends on Asp159, which acts as the Proton donor. Asp388 contributes to the Mg(2+) binding site.

Belongs to the ISN1 family. As to quaternary structure, homotetramer. It depends on Mg(2+) as a cofactor.

It catalyses the reaction IMP + H2O = inosine + phosphate. Its activity is regulated as follows. Allosterically activated by ATP. ATP binding is a prerequisite to magnesium and substrate binding. ATP binds to 2 of the subunits in the homotetramer inducing a closure of these 2 subunits and the release of the C-terminal loop, thereby activating the enzyme. Functionally, IMP-specific 5'-nucleotidase involved in IMP (inositol monophosphate) degradation. This Neurospora crassa (strain ATCC 24698 / 74-OR23-1A / CBS 708.71 / DSM 1257 / FGSC 987) protein is IMP-specific 5'-nucleotidase 1 (isn-1).